The following is a 123-amino-acid chain: Small ribosomal subunit protein uS12 (123 aa).

The residue at position 89 (Asp-89) is a 3-methylthioaspartic acid.

It belongs to the universal ribosomal protein uS12 family. As to quaternary structure, part of the 30S ribosomal subunit. Contacts proteins S8 and S17. May interact with IF1 in the 30S initiation complex.

With S4 and S5 plays an important role in translational accuracy. Functionally, interacts with and stabilizes bases of the 16S rRNA that are involved in tRNA selection in the A site and with the mRNA backbone. Located at the interface of the 30S and 50S subunits, it traverses the body of the 30S subunit contacting proteins on the other side and probably holding the rRNA structure together. The combined cluster of proteins S8, S12 and S17 appears to hold together the shoulder and platform of the 30S subunit. The protein is Small ribosomal subunit protein uS12 of Rhodopseudomonas palustris (strain HaA2).